A 177-amino-acid chain; its full sequence is ATP synthase subunit b (177 aa).

The chain crosses the membrane as a helical span at residues 16 to 36; that stretch reads HLLLANMIVTIVVFLLLLILL.

It belongs to the ATPase B chain family. F-type ATPases have 2 components, F(1) - the catalytic core - and F(0) - the membrane proton channel. F(1) has five subunits: alpha(3), beta(3), gamma(1), delta(1), epsilon(1). F(0) has three main subunits: a(1), b(2) and c(10-14). The alpha and beta chains form an alternating ring which encloses part of the gamma chain. F(1) is attached to F(0) by a central stalk formed by the gamma and epsilon chains, while a peripheral stalk is formed by the delta and b chains.

It localises to the cell membrane. F(1)F(0) ATP synthase produces ATP from ADP in the presence of a proton or sodium gradient. F-type ATPases consist of two structural domains, F(1) containing the extramembraneous catalytic core and F(0) containing the membrane proton channel, linked together by a central stalk and a peripheral stalk. During catalysis, ATP synthesis in the catalytic domain of F(1) is coupled via a rotary mechanism of the central stalk subunits to proton translocation. In terms of biological role, component of the F(0) channel, it forms part of the peripheral stalk, linking F(1) to F(0). The polypeptide is ATP synthase subunit b (Exiguobacterium sibiricum (strain DSM 17290 / CCUG 55495 / CIP 109462 / JCM 13490 / 255-15)).